We begin with the raw amino-acid sequence, 1638 residues long: Non-structural polyprotein 1AB (1638 aa).

Residues 130-222 (LVHQVMEKTR…KEKENALVSV (93 aa)) adopt a coiled-coil conformation. The next 6 membrane-spanning stretches (helical) occupy residues 220–240 (VSVG…FGLI), 379–398 (VMSY…VLAG), 407–427 (APFI…CVAV), 437–457 (FILF…LLWL), 479–499 (ALVY…GVTL), and 507–527 (ILMF…CTTI). Residues histidine 600, aspartate 632, and serine 697 each act as charge relay system; for serine protease activity in the active site. Positions 758-788 (KVSHAAILKELEELREEVQFLKKKCVTYDDY) form a coiled coil. Tyrosine 834 carries the O-(5'-phospho-RNA)-tyrosine modification. Residues 1381–1515 (RYFVEMDWTR…SIRKGFVEYE (135 aa)) form the RdRp catalytic domain.

The protein belongs to the astroviridae polyprotein 1AB family. Monomer. Post-translationally, cleaved by the viral and host proteases. The protease is probably autocatalytically cleaved.

It is found in the host membrane. It catalyses the reaction RNA(n) + a ribonucleoside 5'-triphosphate = RNA(n+1) + diphosphate. Functionally, responsible for the cleavage of the polyprotein into functional products. Protein covalently attached to the 5' extremity of the genomic and subgenomic RNAs. It may serve as a primer for the replicase. In Turkey astrovirus 2 (TAstV-2), this protein is Non-structural polyprotein 1AB (ORF1).